A 304-amino-acid polypeptide reads, in one-letter code: Ornithine carbamoyltransferase (304 aa).

Residues 53–56 (STRT), Gln80, Arg104, and 131–134 (HPCQ) each bind carbamoyl phosphate. Residues Asn162, Asp219, and 223 to 224 (SM) contribute to the L-ornithine site. Residues 259–260 (CL) and Arg287 contribute to the carbamoyl phosphate site.

This sequence belongs to the aspartate/ornithine carbamoyltransferase superfamily. OTCase family.

It localises to the cytoplasm. The enzyme catalyses carbamoyl phosphate + L-ornithine = L-citrulline + phosphate + H(+). The protein operates within amino-acid biosynthesis; L-arginine biosynthesis; L-arginine from L-ornithine and carbamoyl phosphate: step 1/3. Its function is as follows. Reversibly catalyzes the transfer of the carbamoyl group from carbamoyl phosphate (CP) to the N(epsilon) atom of ornithine (ORN) to produce L-citrulline. The chain is Ornithine carbamoyltransferase from Herminiimonas arsenicoxydans.